The following is a 490-amino-acid chain: MSVFLCFLVLLPLILIFLNVLKPSKYKLPPGPKKLPIIGNLHQRRTLHPRNRRNLAEMYGPVALLQYGFVPVVAISSKEAAEEVLKINDLECCSRPEAAGMRATFYNFKDIGMAPFGDEWSLMRKLSVVELFSVKKLQSFKYIIEEENNLCVKKLSEFATRQSPVNLERAIFTLVGNIVCRIGYGINLYECDFFEADRVVDLVLKAEAVIRETVFSDFFPGRIGRFIDCISGQNRRLKNNFSVVDTFFQNVLNEHLKPGRESSTIVDLMIDMKKKQENDGDALKFTTDHLKGMISDIFVAGIGGVAGITLWGMTELIRNPRVMKKVQDEIRTTLGDKKERIKEEDLNQLHYFKLVVKETLRLHPTTPLLLPRQTMSHIKIQGYDVPAKTQILVNVYAMGRDPKLWENADEFNPDRFLDSSVDFKGKNYEFIPFGSGRRICPGMTMGTILVEMALLNLLYFFDWGLAKQEEAKEIINGEENFLAFFQVLHH.

Residues 1–21 (MSVFLCFLVLLPLILIFLNVL) form a helical membrane-spanning segment.

It belongs to the cytochrome P450 family.

The protein localises to the membrane. It catalyses the reaction 2-(L-cystein-S-yl)-2-(1H-indol-3-yl)-acetonitrile + 2 reduced [NADPH--hemoprotein reductase] + 2 O2 = camalexin + hydrogen cyanide + 2 oxidized [NADPH--hemoprotein reductase] + CO2 + 4 H2O + 2 H(+). The catalysed reaction is 2-(L-cystein-S-yl)-2-(1H-indol-3-yl)-acetonitrile + reduced [NADPH--hemoprotein reductase] + O2 = (R)-dihydrocamalexate + hydrogen cyanide + oxidized [NADPH--hemoprotein reductase] + 2 H2O + 2 H(+). It carries out the reaction (R)-dihydrocamalexate + reduced [NADPH--hemoprotein reductase] + O2 = camalexin + oxidized [NADPH--hemoprotein reductase] + CO2 + 2 H2O. Functionally, multifunctional enzyme involved in the biosynthesis of the indole-derived phytoalexin camalexin. Catalyzes two reactions, the formation of dihydrocamalexate from indole-3-acetonitrile-cysteine conjugate and the oxidative decarboxylation of dihydrocamalexate which is the final step in camalexin biosynthesis. Required for the resistance to the fungal pathogens A.brassicicola, B.cinerea, B.elliptica, B.tulipae, L.maculans and Colletotrichum higginsianum. Seems not to be required for resistance to P.syringae, P.porri, and not involved in age-related resistance. This Arabidopsis thaliana (Mouse-ear cress) protein is Bifunctional dihydrocamalexate synthase/camalexin synthase (CYP71B15).